The chain runs to 363 residues: Chorismate synthase (363 aa).

An NADP(+)-binding site is contributed by R48. FMN is bound by residues 125 to 127 (RSS), 238 to 239 (NA), G278, 293 to 297 (KPTAS), and R319.

This sequence belongs to the chorismate synthase family. As to quaternary structure, homotetramer. The cofactor is FMNH2.

The catalysed reaction is 5-O-(1-carboxyvinyl)-3-phosphoshikimate = chorismate + phosphate. It functions in the pathway metabolic intermediate biosynthesis; chorismate biosynthesis; chorismate from D-erythrose 4-phosphate and phosphoenolpyruvate: step 7/7. Functionally, catalyzes the anti-1,4-elimination of the C-3 phosphate and the C-6 proR hydrogen from 5-enolpyruvylshikimate-3-phosphate (EPSP) to yield chorismate, which is the branch point compound that serves as the starting substrate for the three terminal pathways of aromatic amino acid biosynthesis. This reaction introduces a second double bond into the aromatic ring system. The chain is Chorismate synthase from Acinetobacter baumannii (strain AB0057).